The primary structure comprises 251 residues: B3 domain-containing protein REM7 (251 aa).

2 DNA-binding regions (TF-B3) span residues 11–103 (NSHF…LGPS) and 170–251 (CFVA…SRLN).

The protein resides in the nucleus. This Arabidopsis thaliana (Mouse-ear cress) protein is B3 domain-containing protein REM7 (REM7).